A 420-amino-acid polypeptide reads, in one-letter code: MSTSFARKSHTFLPKIFFRKMSSSGAKDKPELQFPFLQDEDTVATLHECKTLFILRGLPGSGKSTLARLIVEKYHNGTKMVSADAYKIIPGSRADFSEEYKRLDEDLAGYCRRDIRVLVLDDTNHERERLDQLFEMADQYQYQVVLVEPKTAWRLDCAQLKEKNQWQLSLDDLKKLKPGLEKDFLPLYFGWFLTKKSSETLRKAGQVFLEELGNHKAFKKELRHFISGDEPKEKLDLVSYFGKRPPGVLHCTTKFCDYGKATGAEEYAQQDVVRRSYGKAFKLSISALFVTPKTAGAQVVLNEQELQLWPSDLDKPSSSESLPPGSRAHVTLGCAADVQPVQTGLDLLEILQQVKGGSQGEEVGELPRGKLYSLGKGRWMLSLAKKMEVKAIFTGYYGKGKPVPVHGSRKGGAMQICTII.

Phosphoserine is present on S9. The residue at position 110 (Y110) is a Phosphotyrosine. Residues S169, S227, and S239 each carry the phosphoserine modification. The active-site Proton acceptor is the H250. T252 contributes to the substrate binding site. Position 262 is a phosphothreonine (T262). H329 (proton donor) is an active-site residue. T331 is a binding site for substrate. Position 358 is a phosphoserine (S358). C417 carries the cysteine methyl ester modification. C417 carries S-farnesyl cysteine lipidation. A propeptide spans 418–420 (TII) (removed in mature form).

It belongs to the 2H phosphoesterase superfamily. CNPase family. In terms of assembly, exists as monomers and homodimers.

Its subcellular location is the membrane. It is found in the melanosome. It catalyses the reaction a nucleoside 2',3'-cyclic phosphate + H2O = a nucleoside 2'-phosphate + H(+). Its function is as follows. Catalyzes the formation of 2'-nucleotide products from 2',3'-cyclic substrates. May participate in RNA metabolism in the myelinating cell, CNP is the third most abundant protein in central nervous system myelin. In Rattus norvegicus (Rat), this protein is 2',3'-cyclic-nucleotide 3'-phosphodiesterase.